Reading from the N-terminus, the 96-residue chain is Putative pterin-4-alpha-carbinolamine dehydratase (96 aa).

Belongs to the pterin-4-alpha-carbinolamine dehydratase family.

The enzyme catalyses (4aS,6R)-4a-hydroxy-L-erythro-5,6,7,8-tetrahydrobiopterin = (6R)-L-erythro-6,7-dihydrobiopterin + H2O. The chain is Putative pterin-4-alpha-carbinolamine dehydratase from Prochlorococcus marinus (strain SARG / CCMP1375 / SS120).